The primary structure comprises 369 residues: uncharacterized protein (369 aa).

The protein belongs to the Gfo/Idh/MocA family.

This is an uncharacterized protein from Schizosaccharomyces pombe (strain 972 / ATCC 24843) (Fission yeast).